Here is an 819-residue protein sequence, read N- to C-terminus: Glycine-rich domain-containing protein 1 (819 aa).

Its function is as follows. Plays a regulatory role in abscisic acid (ABA) signaling and tolerance to abiotic stress during germination. May be involved in the regulation of the ABI transcriptional factors. The protein is Glycine-rich domain-containing protein 1 of Arabidopsis thaliana (Mouse-ear cress).